Here is a 227-residue protein sequence, read N- to C-terminus: Adenosylcobinamide-GDP ribazoletransferase (227 aa).

5 consecutive transmembrane segments (helical) span residues 3 to 23 (CLKA…ELDF), 26 to 46 (IWAT…AVYF), 95 to 115 (GVGG…ARPE), 117 to 137 (WLDY…VAAY), and 165 to 185 (AVAA…SLFF).

The protein belongs to the CobS family. It depends on Mg(2+) as a cofactor.

The protein resides in the cell membrane. It carries out the reaction alpha-ribazole + adenosylcob(III)inamide-GDP = adenosylcob(III)alamin + GMP + H(+). The enzyme catalyses alpha-ribazole 5'-phosphate + adenosylcob(III)inamide-GDP = adenosylcob(III)alamin 5'-phosphate + GMP + H(+). It functions in the pathway cofactor biosynthesis; adenosylcobalamin biosynthesis; adenosylcobalamin from cob(II)yrinate a,c-diamide: step 7/7. Its function is as follows. Joins adenosylcobinamide-GDP and alpha-ribazole to generate adenosylcobalamin (Ado-cobalamin). Also synthesizes adenosylcobalamin 5'-phosphate from adenosylcobinamide-GDP and alpha-ribazole 5'-phosphate. This chain is Adenosylcobinamide-GDP ribazoletransferase, found in Pyrobaculum islandicum (strain DSM 4184 / JCM 9189 / GEO3).